Consider the following 2406-residue polypeptide: MEAFWSASKKRSTSVAKGAHFLRQDISRFDANFFGLPKHEADAMDPQQRIMMEVAYEALEGAGLPLDQIAGSRTGVFVGHFSNDYRDMICRDPDDAPLYSFTGTSTASLANRLSYLWDLRGPSFSINTACSSSLVALHLACQSLQRGECEIAIVGGSNLLLNPEMFMFLSNQGFLSPDGKCKSFDESANGYGRGEGFGCVILKRVDDAVLAGDAIRAVIRGTGSNQDGRTKGLTTPSAEAQRALIEEVYQRAGLDFKTTGYTEAHGTGTQAGDSQEMNALAKTIAATHTAESKLIVGSVKSNVSQSSAQNSCRFLTCLQIGHLEAAAGIASVIKAVLMLERGLIPPTIHFKKGNPKIPFDEWNIRVPTTLTPWPTDGVRRISINSFGYSGTNAHAVLDDAYHYLEAKKHAFDKGHASNGTNGTLTNGHILNGEHTSNGMNGTLTNGHASNDEHALNGTNDALTNGHGPTDGPTSRPRLFIWSAQDKDGLKRVREPLAQYIQAKAAEYQQDQSLKTEETFMSELAYTLSERRSRLQWKTYTIASSPSTLSASLSLGEEASATPVALSSRNPRIGFVFTGQGAQWPRMGAELMAYPAFRECIEAAGSYLQGVCGCPWSAAEELQKHKSISLVNSSAYSHALCTILQVALVDLLRTWGITPTAVVGHSGGEIASAYAFGALTREDAWRVAYHRGRLSAAIKTKAPGLNGAMMAVALSPEQAAEWISKVTDGHLVVACINSPTSVTIAGDSLGIDQLLGMLQEKGGIFARKLLVDTAYHSPHMKIIADDYHAMISDVMPRAAQGGCIMSSSVTGAVVEATQLGADYWTASLTSPVRFSEAIYDMLRPIRGKTRLEENTVDVLVEVGPHSALQGPATQSIKVHNIANVPYYSVLRRNQDAVDTALNLAGSLFTQGYKVDIRQVNDDGDAHFAAPLTDLPTYSWNHSQRFWHESRMEREFRSRAAPKPSLLGSPSPSLAEGERIWRGFIRPAEAPWVNDHKIHGAVLYPGAGYLAMALEAATQTADTTRRVVAYKLRDIQLTAAALVADGANLEYIVQLRPHVVGNRDSTAAWTEFIVTTAPDGKALVQNCRGLLVIEYEAAEGSDTSRERSLELQGWKTQYVDAQQACVHRLDPSGFYSDMRSWGLDYGPAFANVCEVRNRDGQSVGSVRIPDIPAPIVDGSDRPHVVHPGTLDAVFHLAFAAAKGGAYAPSTAMVPKSIDAITIAANVPFQAGTRLPGFSRAGRHGLNELVADIVMLDDTEHLPAIVIEGFLCAEIAGASSNSADNSAKSLASRVTWRPALGLLSSDDLCSALSAHIGEAKLVEYLKLFHHSNPVLSVLEVAAVPNPQEPTPTPLLQRECLASVAKTWDVTTACRDETLKTSMRQEAALEVLDFGQDLDTDVPEAYDLLIASDLSLYASDPVPAVERMCKVLKQGGAICILTTDSIFLRIQPFLDACHMEVTVLPNPHGSDAAPSQDPSLIIAKKSLPYTNGINGAAARPQQVTLIQAAHPTEAAIAMASQLTVSLEEHGYEAHVVSWGSDMSTLAGKSCISLVEFQKTLLQDLAVDDFQSVKKLLLETGKLLWVTALDDPSAAMIDGLVRVVRNETPGLSLRVFHADEPTLAPAERLAGMLAKAFLWTGQDNEFRVQGNLLHVSRIEEDTTLNEEIHGLLPGAARTISRIPLKDVQYPVKLCVQTPGMLGSVCLEPDDSAETVLGPDFIEIHVKATALNFREVMVAMGQMADSKLGIDAAGVVRRVGSSVTKFKVGDKVAMYGHGAHRTIHRSRADYCALIPDGMSFEEAATIPAVHGTAWNALVRLARVQKGQSILIHAAAGGVGQVAVQIARHTGMEIFATVSSEAKRKLLRDEYGVPDDHIFNSRDLSFVKGVKRMTNGRGVDVVLNSLAGEALRQTWHCIAPFGYFVEIGVRDIINNTGLDMRPFMQDATFSFFNLTHIEQDRPDIMGAIIQGAFDFLRRGITQLVTPMVTFPISDVEGALRLMQTGKHLGKIALSWDEDHAEPISVVQPRMRAPKLDPDGVYLLVGGLGGLGRSLSSKLVSLGARRLCFLSRSGARSANAKDLIDKLEQQQVRVQIQTCDVADESAIASAVDRCTRELGKIRGVFQCAMVLRDGLFANMTHQQWVESTRPKVQGSWNLHQHLPDDLDFFITLSSFTATFGSRGQSNYAAAGAYEDALAYHRRTRGRHATTVDLGIMRDVGVLAETGMTDAFREWEKPYGIRESEFLVLMERVIDRDIAAIMPPQVLTGFATGGSVSSAGISTPYYMEDARFSILARTGVRDDGASAASTDAVPAYTLVSQAKSFQEASDSVLEALVRQVAKMFQTPPSEIDTSRFLHSYGIDSLVAIEIVNWVMREAKSTMTVFDVLAGVPMTTFCNRIAAKSTVLPKELVPVH.

The 399-residue stretch at 1 to 399 (MEAFWSASKK…GTNAHAVLDD (399 aa)) folds into the Ketosynthase family 3 (KS3) domain. Cys130 is an active-site residue. Cys130 functions as the For beta-ketoacyl synthase activity in the catalytic mechanism. Residues 414-476 (GHASNGTNGT…GPTDGPTSRP (63 aa)) are disordered. A compositionally biased stretch (polar residues) spans 417 to 448 (SNGTNGTLTNGHILNGEHTSNGMNGTLTNGHA). The interval 574-911 (FVFTGQGAQW…LAGSLFTQGY (338 aa)) is malonyl-CoA:ACP transacylase (MAT) domain. The For malonyltransferase activity role is filled by Ser665. Residues 962–1096 (PSLLGSPSPS…GLLVIEYEAA (135 aa)) form an N-terminal hotdog fold region. Positions 962-1278 (PSLLGSPSPS…CAEIAGASSN (317 aa)) constitute a PKS/mFAS DH domain. The segment at 964–1273 (LLGSPSPSLA…IEGFLCAEIA (310 aa)) is dehydratase (DH) domain. His994 functions as the Proton acceptor; for dehydratase activity in the catalytic mechanism. The tract at residues 1124-1278 (VHRLDPSGFY…CAEIAGASSN (155 aa)) is C-terminal hotdog fold. Asp1189 acts as the Proton donor; for dehydratase activity in catalysis. Residues 1694–2006 (GMLGSVCLEP…TGKHLGKIAL (313 aa)) form an enoylreductase (ER) domain region. The interval 2032–2210 (GVYLLVGGLG…TTVDLGIMRD (179 aa)) is ketoreductase (KR) domain. The Carrier domain occupies 2318-2395 (EASDSVLEAL…TFCNRIAAKS (78 aa)). Ser2355 is modified (O-(pantetheine 4'-phosphoryl)serine).

The protein operates within secondary metabolite biosynthesis. In terms of biological role, highly reducing polyketide synthase; part of the gene cluster that mediates the biosynthesis of the dimeric xanthones cryptosporioptides. The pathway begins with the synthesis of atrochrysone thioester by the polyketide synthase dmx-nrPKS. The atrochrysone carboxyl ACP thioesterase dmxR1 then breaks the thioester bond and releases the atrochrysone carboxylic acid from dmx-nrPKS. Atrochrysone carboxylic acid is decarboxylated by the decarboxylase dmxR15, and oxidized by the anthrone oxygenase dmxR16 to yield emodin. Emodin is then reduced to emodin hydroquinone by the oxidoreductase dmxR7. A-ring reduction by the short chain dehydrogenase dmxR18, dehydration by the scytalone dehydratase-like protein dmxR17 and probable spontaneous re-oxidation, results in overall deoxygenation to chrysophanol. Baeyer-Villiger oxidation by the Baeyer-Villiger monooxygenase (BVMO) dmxR6 then yields monodictylactone in equilibrium with monodictyphenone. In the case of the cryptosporioptides biosynthesis, monodictylactone is reduced at C-12 to an alcohol (by the short chain dehydrogenases dmxR12 or dmxR8) and hydroxylated at C-5 by dmxR9, yielding the electron-rich aromatic which could eliminate H(2)O to form the ortho-quinonemethide, followed by tautomerisation to paraquinone and complete the formal reduction to produce the 10-methylgroup. Conjugate addition of C-4a-OH to the resulting paraquinone by the monooxygenase dmxR10 then gives cyclohexadienone, which is then reduced at C-5 by the short chain dehydrogenase dmxR3 to give the dihydroxanthone. The 6,7-epoxide in the cryptosporioptides could be introduced by the cytochrome P450 monooxygenase dmxL3. The highly reducing PKS dmxL2 manufactures butyrate, which is further carboxylated by dmxL1 to form ethylmalonate. It is not yet clear whether the carboxylation occurs while the butyrate is attached to the ACP of dmxL2, but this unusual fungal metabolite could then be esterified to O-5 by the O-acetyltransferase dmxR13. Finally, dimerization performed by dmxR5 gives the observed dimers cryptosporioptides A, B and C as the final products of the pathway. In Cryptosporiopsis sp. (strain 8999), this protein is Highly reducing polyketide synthase dmxL2.